Here is a 371-residue protein sequence, read N- to C-terminus: Cytochrome b (371 aa).

The next 4 helical transmembrane spans lie at 25–45, 69–90, 105–125, and 170–190; these read FGSM…FLAV, WMMQ…YIHI, WMSG…GYVL, and FFAL…LHII. The heme b site is built by histidine 75 and histidine 89. Heme b is bound by residues histidine 174 and histidine 188. Histidine 193 is a binding site for a ubiquinone. 4 helical membrane-spanning segments follow: residues 218-238, 280-300, 312-332, and 339-358; these read YKDL…VSFF, LGGA…PFTH, LSQL…WAAT, and YIII…ISMP.

Belongs to the cytochrome b family. In terms of assembly, the cytochrome bc1 complex contains 3 respiratory subunits (MT-CYB, CYC1 and UQCRFS1), 2 core proteins (UQCRC1 and UQCRC2) and probably 6 low-molecular weight proteins. It depends on heme b as a cofactor.

The protein localises to the mitochondrion inner membrane. Functionally, component of the ubiquinol-cytochrome c reductase complex (complex III or cytochrome b-c1 complex) that is part of the mitochondrial respiratory chain. The b-c1 complex mediates electron transfer from ubiquinol to cytochrome c. Contributes to the generation of a proton gradient across the mitochondrial membrane that is then used for ATP synthesis. The chain is Cytochrome b (MT-CYB) from Python molurus (Indian python).